The sequence spans 350 residues: Phenylalanine--tRNA ligase alpha subunit (350 aa).

E260 is a Mg(2+) binding site.

It belongs to the class-II aminoacyl-tRNA synthetase family. Phe-tRNA synthetase alpha subunit type 1 subfamily. As to quaternary structure, tetramer of two alpha and two beta subunits. The cofactor is Mg(2+).

The protein resides in the cytoplasm. The enzyme catalyses tRNA(Phe) + L-phenylalanine + ATP = L-phenylalanyl-tRNA(Phe) + AMP + diphosphate + H(+). The chain is Phenylalanine--tRNA ligase alpha subunit from Mesoplasma florum (strain ATCC 33453 / NBRC 100688 / NCTC 11704 / L1) (Acholeplasma florum).